A 408-amino-acid chain; its full sequence is CinA-like protein (408 aa).

This sequence belongs to the CinA family.

The polypeptide is CinA-like protein (Anaeromyxobacter dehalogenans (strain 2CP-1 / ATCC BAA-258)).